The sequence spans 333 residues: Acetoin:2,6-dichlorophenolindophenol oxidoreductase subunit alpha (333 aa).

In terms of assembly, tetramer of 2 alpha and 2 beta subunits. Thiamine diphosphate serves as cofactor.

It functions in the pathway ketone degradation; acetoin degradation. Functionally, catalyzes the 2,6-dichlorophenolindophenol-dependent cleavage of acetoin into acetate and acetaldehyde, in vitro. The alpha subunit is probably the catalytic subunit of the enzyme. The sequence is that of Acetoin:2,6-dichlorophenolindophenol oxidoreductase subunit alpha (acoA) from Cupriavidus necator (strain ATCC 17699 / DSM 428 / KCTC 22496 / NCIMB 10442 / H16 / Stanier 337) (Ralstonia eutropha).